The primary structure comprises 211 residues: Protein-methionine-sulfoxide reductase heme-binding subunit MsrQ (211 aa).

5 helical membrane-spanning segments follow: residues 45-65, 82-102, 116-136, 153-173, and 178-198; these read HFTGLTALKFLLAALLITPLA, LWCFAWATLHLTSYALLELGV, PYLTLGIISWVILLALAFTST, FVYLVAILAPIHYLWSVKIIS, and IYAGLAVLLLALRYKKLLSLF.

It belongs to the MsrQ family. In terms of assembly, heterodimer of a catalytic subunit (MsrP) and a heme-binding subunit (MsrQ). It depends on FMN as a cofactor. Heme b serves as cofactor.

It localises to the cell inner membrane. Functionally, part of the MsrPQ system that repairs oxidized periplasmic proteins containing methionine sulfoxide residues (Met-O), using respiratory chain electrons. Thus protects these proteins from oxidative-stress damage caused by reactive species of oxygen and chlorine generated by the host defense mechanisms. MsrPQ is essential for the maintenance of envelope integrity under bleach stress, rescuing a wide series of structurally unrelated periplasmic proteins from methionine oxidation, including the primary periplasmic chaperone SurA and the lipoprotein Pal. MsrQ provides electrons for reduction to the reductase catalytic subunit MsrP, using the quinone pool of the respiratory chain. The chain is Protein-methionine-sulfoxide reductase heme-binding subunit MsrQ from Escherichia coli O127:H6 (strain E2348/69 / EPEC).